Consider the following 440-residue polypeptide: Thymidine phosphorylase (440 aa).

This sequence belongs to the thymidine/pyrimidine-nucleoside phosphorylase family. Homodimer.

It carries out the reaction thymidine + phosphate = 2-deoxy-alpha-D-ribose 1-phosphate + thymine. Its pathway is pyrimidine metabolism; dTMP biosynthesis via salvage pathway; dTMP from thymine: step 1/2. Functionally, the enzymes which catalyze the reversible phosphorolysis of pyrimidine nucleosides are involved in the degradation of these compounds and in their utilization as carbon and energy sources, or in the rescue of pyrimidine bases for nucleotide synthesis. The sequence is that of Thymidine phosphorylase from Proteus mirabilis (strain HI4320).